A 138-amino-acid polypeptide reads, in one-letter code: Large ribosomal subunit protein uL16 (138 aa).

Positions 1–15 (MLSPKKVKYRKKQRG) are enriched in basic residues. Residues 1–21 (MLSPKKVKYRKKQRGRLSGEA) form a disordered region.

Belongs to the universal ribosomal protein uL16 family. As to quaternary structure, part of the 50S ribosomal subunit.

In terms of biological role, binds 23S rRNA and is also seen to make contacts with the A and possibly P site tRNAs. In Borreliella burgdorferi (strain ATCC 35210 / DSM 4680 / CIP 102532 / B31) (Borrelia burgdorferi), this protein is Large ribosomal subunit protein uL16.